The chain runs to 195 residues: Protein GrpE (195 aa).

The span at 1–20 shows a compositional bias: basic and acidic residues; it reads MSSKEQKTPDEQVLDQKEAA. Residues 1-40 are disordered; the sequence is MSSKEQKTPDEQVLDQKEAAKGQQADAAPETADVADPRDA.

The protein belongs to the GrpE family. As to quaternary structure, homodimer.

The protein localises to the cytoplasm. Its function is as follows. Participates actively in the response to hyperosmotic and heat shock by preventing the aggregation of stress-denatured proteins, in association with DnaK and GrpE. It is the nucleotide exchange factor for DnaK and may function as a thermosensor. Unfolded proteins bind initially to DnaJ; upon interaction with the DnaJ-bound protein, DnaK hydrolyzes its bound ATP, resulting in the formation of a stable complex. GrpE releases ADP from DnaK; ATP binding to DnaK triggers the release of the substrate protein, thus completing the reaction cycle. Several rounds of ATP-dependent interactions between DnaJ, DnaK and GrpE are required for fully efficient folding. In Pectobacterium carotovorum subsp. carotovorum (strain PC1), this protein is Protein GrpE.